We begin with the raw amino-acid sequence, 337 residues long: 6-phosphogluconolactonase (337 aa).

It belongs to the cycloisomerase 2 family.

It carries out the reaction 6-phospho-D-glucono-1,5-lactone + H2O = 6-phospho-D-gluconate + H(+). Its pathway is carbohydrate degradation; pentose phosphate pathway; D-ribulose 5-phosphate from D-glucose 6-phosphate (oxidative stage): step 2/3. In terms of biological role, catalyzes the hydrolysis of 6-phosphogluconolactone to 6-phosphogluconate. In Blochmanniella pennsylvanica (strain BPEN), this protein is 6-phosphogluconolactonase.